A 154-amino-acid polypeptide reads, in one-letter code: Endoribonuclease YbeY (154 aa).

Zn(2+)-binding residues include histidine 118, histidine 122, and histidine 128.

It belongs to the endoribonuclease YbeY family. Zn(2+) serves as cofactor.

The protein resides in the cytoplasm. Its function is as follows. Single strand-specific metallo-endoribonuclease involved in late-stage 70S ribosome quality control and in maturation of the 3' terminus of the 16S rRNA. In Macrococcus caseolyticus (strain JCSC5402) (Macrococcoides caseolyticum), this protein is Endoribonuclease YbeY.